Here is a 200-residue protein sequence, read N- to C-terminus: ATP-dependent Clp protease proteolytic subunit (200 aa).

Ser-103 acts as the Nucleophile in catalysis. The active site involves His-128.

Belongs to the peptidase S14 family. Fourteen ClpP subunits assemble into 2 heptameric rings which stack back to back to give a disk-like structure with a central cavity, resembling the structure of eukaryotic proteasomes.

It is found in the cytoplasm. It carries out the reaction Hydrolysis of proteins to small peptides in the presence of ATP and magnesium. alpha-casein is the usual test substrate. In the absence of ATP, only oligopeptides shorter than five residues are hydrolyzed (such as succinyl-Leu-Tyr-|-NHMec, and Leu-Tyr-Leu-|-Tyr-Trp, in which cleavage of the -Tyr-|-Leu- and -Tyr-|-Trp bonds also occurs).. In terms of biological role, cleaves peptides in various proteins in a process that requires ATP hydrolysis. Has a chymotrypsin-like activity. Plays a major role in the degradation of misfolded proteins. The protein is ATP-dependent Clp protease proteolytic subunit of Vibrio vulnificus (strain CMCP6).